The following is a 261-amino-acid chain: tRNA pseudouridine synthase A (261 aa).

D51 (nucleophile) is an active-site residue. Y109 is a substrate binding site.

It belongs to the tRNA pseudouridine synthase TruA family. As to quaternary structure, homodimer.

It carries out the reaction uridine(38/39/40) in tRNA = pseudouridine(38/39/40) in tRNA. Functionally, formation of pseudouridine at positions 38, 39 and 40 in the anticodon stem and loop of transfer RNAs. This Psychromonas ingrahamii (strain DSM 17664 / CCUG 51855 / 37) protein is tRNA pseudouridine synthase A.